A 777-amino-acid polypeptide reads, in one-letter code: Shutoff protein (777 aa).

2 disordered regions span residues 1–55 and 261–283; these read MEED…SVPV and PLDS…DDDL. Polar residues predominate over residues 9-20; that stretch reads QPDSETLTSPTS. The binding to host EIF4G stretch occupies residues 250 to 314; that stretch reads VMDHLLIKRV…VILVTVELEC (65 aa). The region spanning 317 to 435 is the RRM domain; the sequence is RFFANPQTLR…ELWTAFSERT (119 aa). Residues tyrosine 334 and tyrosine 649 each carry the phosphotyrosine; by host modification. The interval 652-777 is disordered; sequence PQTGEELNTP…AAARLVESQP (126 aa). Over residues 656 to 665 the composition is skewed to polar residues; that stretch reads EELNTPSPSA. Positions 728–738 are enriched in gly residues; sequence GAGGQTPQGRG. Over residues 753–763 the composition is skewed to basic and acidic residues; that stretch reads TRSEPASDGES.

Belongs to the adenoviridae shutoff protein family. As to quaternary structure, monomer. Interacts with hexon protein; this interaction allows chaperoning and trimerization of hexon proteins. Interacts (via N-terminus) with host initiation factor EIF4G (via C-terminus). Interacts (via RRM domain) with viral mRNAs that contain the tripartite leader; this interaction allows ribosome shunting and expression of viral late mRNAs. In terms of processing, might be cleaved by the viral protease. Post-translationally, phosphorylated. Tyrosine phosphorylation enhances preferential binding to tripartite leader mRNAs and allows ribosome shunting. Methylated. Asymmetric dimethylation by host PRMT1 of the Arg/Gly-rich region may regulate shutoff protein binding to hexon and promote the capsid assembly in the nucleus.

Its subcellular location is the host cytoplasm. In terms of biological role, protein that inhibits host translation while promoting late viral translation by ribosome shunting. Blocks host cap-dependent translation by binding to eIF4G, displacing MKNK1 from cap initiation complexes and preventing EIF4E phosphorylation. Binds to the tripartite leader sequence of viral late mRNAs and recruits host eIF4G, PABPC1/poly-A binding protein and 40S ribosomes subunits on viral mRNAs, allowing ribosome shunting and efficient translation of late viral mRNAs even though conventional translation via ribosome scanning from the cap has been shut off in the host cell. During assembly, acts as a chaperone protein that helps hexon proteins assembly into trimers. The sequence is that of Shutoff protein from Homo sapiens (Human).